Reading from the N-terminus, the 336-residue chain is Dihydroorotate dehydrogenase (quinone) (336 aa).

FMN is bound by residues 62 to 66 (AGLDK) and threonine 86. Lysine 66 provides a ligand contact to substrate. 111 to 115 (NRMGF) contributes to the substrate binding site. Positions 139 and 172 each coordinate FMN. Position 172 (asparagine 172) interacts with substrate. The active-site Nucleophile is serine 175. Position 177 (asparagine 177) interacts with substrate. FMN is bound by residues lysine 217 and threonine 245. Position 246-247 (246-247 (NT)) interacts with substrate. FMN contacts are provided by residues glycine 268, glycine 297, and 318 to 319 (YS).

The protein belongs to the dihydroorotate dehydrogenase family. Type 2 subfamily. In terms of assembly, monomer. FMN serves as cofactor.

The protein localises to the cell membrane. The enzyme catalyses (S)-dihydroorotate + a quinone = orotate + a quinol. The protein operates within pyrimidine metabolism; UMP biosynthesis via de novo pathway; orotate from (S)-dihydroorotate (quinone route): step 1/1. Catalyzes the conversion of dihydroorotate to orotate with quinone as electron acceptor. The chain is Dihydroorotate dehydrogenase (quinone) from Pectobacterium atrosepticum (strain SCRI 1043 / ATCC BAA-672) (Erwinia carotovora subsp. atroseptica).